The sequence spans 317 residues: DNA repair nuclease/redox regulator APEX1 (317 aa).

Residues 1–32 form a necessary for interaction with YBX1, binding to RNA, association together with NPM1 to rRNA, endoribonuclease activity on abasic RNA and localization in the nucleoli region; the sequence is MPKRGKRAAAEDGEEPKSEPETKKSKGAAKKT. The segment at 1–57 is disordered; that stretch reads MPKRGKRAAAEDGEEPKSEPETKKSKGAAKKTEKEAAGEGPVLYEDPPDQKTSASGK. Lysine 6 bears the N6-acetyllysine; by EP300 mark. The short motif at 8–12 is the Nuclear localization signal (NLS) element; sequence AAAED. Residues 15 to 37 show a composition bias toward basic and acidic residues; it reads EPKSEPETKKSKGAAKKTEKEAA. Position 18 is a phosphoserine (serine 18). Positions 22-32 are necessary for interaction with NPM1 and for efficient rRNA binding; it reads TKKSKGAAKKT. N6-acetyllysine is present on residues lysine 26, lysine 30, lysine 31, and lysine 34. The residue at position 53 (serine 53) is a Phosphoserine. Positions 63-79 match the Nuclear export signal (NES) motif; the sequence is ICSWNVDGLRAWIKKKG. The residue at position 64 (cysteine 64) is an S-nitrosocysteine; alternate. The cysteines at positions 64 and 92 are disulfide-linked. Residue aspartate 69 participates in Mg(2+) binding. Cysteine 92 is modified (S-nitrosocysteine; alternate). Glutamate 95 lines the Mg(2+) pocket. Tyrosine 170 is a catalytic residue. Lysine 196 carries the post-translational modification N6-acetyllysine. 2 residues coordinate Mg(2+): aspartate 209 and asparagine 211. Catalysis depends on aspartate 209, which acts as the Proton donor/acceptor. Residue threonine 232 is modified to Phosphothreonine; by CDK5. The interval 288–317 is mitochondrial targeting sequence (MTS); it reads HSLLPALCDSKIRSKALGSDHCPITLYLAL. Mg(2+) is bound at residue aspartate 307. An S-nitrosocysteine modification is found at cysteine 309.

It belongs to the DNA repair enzymes AP/ExoA family. As to quaternary structure, monomer. Homodimer; disulfide-linked. Component of the SET complex, composed of at least APEX1, SET, ANP32A, HMGB2, NME1 and TREX1. Associates with the dimer XRCC5/XRCC6 in a DNA-dependent manner. Interacts with SIRT1; the interaction is increased in the context of genotoxic stress. Interacts with HDAC1, HDAC2 and HDAC3; the interactions are not dependent on the APEX1 acetylation status. Interacts with XRCC1; the interaction is induced by SIRT1 and increased with the APEX1 acetylated form. Interacts with NPM1 (via N-terminal domain); the interaction is RNA-dependent and decreases in hydrogen peroxide-damaged cells. Interacts (via N-terminus) with YBX1 (via C-terminus); the interaction is increased in presence of APEX1 acetylated. Interacts with HNRNPL; the interaction is DNA-dependent. Interacts (via N-terminus) with KPNA1 and KPNA2. Interacts with TXN; the interaction stimulates the FOS/JUN AP-1 complex DNA-binding activity in a redox-dependent manner. Interacts with GZMA, KRT8, MDM2, POLB, PRDX6, PRPF19, RPLP0, TOMM20 and WDR77. Binds to CDK5. Mg(2+) serves as cofactor. The cofactor is Mn(2+). Phosphorylated. Phosphorylation by kinase PKC or casein kinase CK2 results in enhanced redox activity that stimulates binding of the FOS/JUN AP-1 complex to its cognate binding site. AP-endodeoxyribonuclease activity is not affected by CK2-mediated phosphorylation. Phosphorylation of Thr-232 by CDK5 in response to MPP(+)/MPTP (1-methyl-4-phenylpyridinium) reduces AP-endodeoxyribonuclease activity resulting in accumulation of DNA damage and contributing to neuronal death. In terms of processing, acetylated on Lys-6. Acetylation is increased by the transcriptional coactivator EP300 acetyltransferase, genotoxic agents like H(2)O(2) and methyl methanesulfonate (MMS). Acetylation increases its binding affinity to the negative calcium response element (nCaRE) DNA promoter. The acetylated form induces a stronger binding of YBX1 to the Y-box sequence in the MDR1 promoter than the unacetylated form. Deacetylated on lysines. Lys-6 is deacetylated by SIRT1. Post-translationally, cleaved at Lys-30 by granzyme A to create the mitochondrial form; leading in reduction of binding to DNA, AP endodeoxyribonuclease activity, redox activation of transcription factors and to enhanced cell death. Cleaved by granzyme K; leading to intracellular ROS accumulation and enhanced cell death after oxidative stress. Cys-64 and Cys-92 are nitrosylated in response to nitric oxide (NO) and lead to the exposure of the nuclear export signal (NES). In terms of processing, ubiquitinated by MDM2; leading to translocation to the cytoplasm and proteasomal degradation.

It localises to the nucleus. The protein localises to the nucleolus. The protein resides in the nucleus speckle. It is found in the endoplasmic reticulum. Its subcellular location is the cytoplasm. It localises to the mitochondrion. It carries out the reaction a deoxyribonucleotide-2'-deoxyribose-5'-monophosphate-DNA + H2O = a 5'-end 2'-deoxyribose-5'-monophosphate-DNA + a 3'-end 2'-deoxyribonucleotide-DNA + H(+). It catalyses the reaction Exonucleolytic cleavage in the 3'- to 5'-direction to yield nucleoside 5'-phosphates.. The enzyme catalyses a 3'-end 2'-deoxyribonucleotide-3'-phosphoglycolate-DNA + H2O = 2-phosphoglycolate + a 3'-end 2'-deoxyribonucleotide-DNA + H(+). The catalysed reaction is a 3'-end 2'-deoxyribonucleotide-8-oxoguanine-DNA + H2O = 8-oxo-dGMP + a 3'-end 2'-deoxyribonucleotide-DNA + H(+). NPM1 stimulates endodeoxyribonuclease activity on double-stranded DNA with AP sites, but inhibits endoribonuclease activity on single-stranded RNA containing AP sites. In terms of biological role, multifunctional protein that plays a central role in the cellular response to oxidative stress. The two major activities of APEX1 are DNA repair and redox regulation of transcriptional factors. Functions as an apurinic/apyrimidinic (AP) endodeoxyribonuclease in the base excision repair (BER) pathway of DNA lesions induced by oxidative and alkylating agents. Initiates repair of AP sites in DNA by catalyzing hydrolytic incision of the phosphodiester backbone immediately adjacent to the damage, generating a single-strand break with 5'-deoxyribose phosphate and 3'-hydroxyl ends. Also incises at AP sites in the DNA strand of DNA/RNA hybrids, single-stranded DNA regions of R-loop structures, and single-stranded RNA molecules. Operates at switch sites of immunoglobulin (Ig) constant regions where it mediates Ig isotype class switch recombination. Processes AP sites induced by successive action of AICDA and UNG. Generates staggered nicks in opposite DNA strands resulting in the formation of double-strand DNA breaks that are finally resolved via non-homologous end joining repair pathway. Has 3'-5' exodeoxyribonuclease activity on mismatched deoxyribonucleotides at the 3' termini of nicked or gapped DNA molecules during short-patch BER. Possesses DNA 3' phosphodiesterase activity capable of removing lesions (such as phosphoglycolate and 8-oxoguanine) blocking the 3' side of DNA strand breaks. Also acts as an endoribonuclease involved in the control of single-stranded RNA metabolism. Plays a role in regulating MYC mRNA turnover by preferentially cleaving in between UA and CA dinucleotides of the MYC coding region determinant (CRD). In association with NMD1, plays a role in the rRNA quality control process during cell cycle progression. Acts as a loading factor for POLB onto non-incised AP sites in DNA and stimulates the 5'-terminal deoxyribose 5'-phosphate (dRp) excision activity of POLB. Exerts reversible nuclear redox activity to regulate DNA binding affinity and transcriptional activity of transcriptional factors by controlling the redox status of their DNA-binding domain, such as the FOS/JUN AP-1 complex after exposure to IR. Involved in calcium-dependent down-regulation of parathyroid hormone (PTH) expression by binding to negative calcium response elements (nCaREs). Together with HNRNPL or the dimer XRCC5/XRCC6, associates with nCaRE, acting as an activator of transcriptional repression. May also play a role in the epigenetic regulation of gene expression by participating in DNA demethylation. Stimulates the YBX1-mediated MDR1 promoter activity, when acetylated at Lys-6 and Lys-7, leading to drug resistance. Plays a role in protection from granzyme-mediated cellular repair leading to cell death. Binds DNA and RNA. Associates, together with YBX1, on the MDR1 promoter. Together with NPM1, associates with rRNA. This is DNA repair nuclease/redox regulator APEX1 (Apex1) from Rattus norvegicus (Rat).